The sequence spans 188 residues: Elongation factor P (188 aa).

Belongs to the elongation factor P family.

The protein resides in the cytoplasm. The protein operates within protein biosynthesis; polypeptide chain elongation. Functionally, involved in peptide bond synthesis. Stimulates efficient translation and peptide-bond synthesis on native or reconstituted 70S ribosomes in vitro. Probably functions indirectly by altering the affinity of the ribosome for aminoacyl-tRNA, thus increasing their reactivity as acceptors for peptidyl transferase. The protein is Elongation factor P of Bradyrhizobium sp. (strain BTAi1 / ATCC BAA-1182).